A 629-amino-acid chain; its full sequence is Phosphomethylpyrimidine synthase (629 aa).

The disordered stretch occupies residues 1 to 24; the sequence is MSTKPKNAAHLSESAQVDSGSVQP. Positions 13–24 are enriched in polar residues; the sequence is ESAQVDSGSVQP. Residues asparagine 233, methionine 262, tyrosine 291, histidine 327, 347–349, 388–391, and glutamate 427 each bind substrate; these read SRG and DGLR. Position 431 (histidine 431) interacts with Zn(2+). Tyrosine 454 is a substrate binding site. Histidine 495 serves as a coordination point for Zn(2+). Residues cysteine 575, cysteine 578, and cysteine 583 each coordinate [4Fe-4S] cluster.

This sequence belongs to the ThiC family. Homodimer. Requires [4Fe-4S] cluster as cofactor.

The catalysed reaction is 5-amino-1-(5-phospho-beta-D-ribosyl)imidazole + S-adenosyl-L-methionine = 4-amino-2-methyl-5-(phosphooxymethyl)pyrimidine + CO + 5'-deoxyadenosine + formate + L-methionine + 3 H(+). It participates in cofactor biosynthesis; thiamine diphosphate biosynthesis. Functionally, catalyzes the synthesis of the hydroxymethylpyrimidine phosphate (HMP-P) moiety of thiamine from aminoimidazole ribotide (AIR) in a radical S-adenosyl-L-methionine (SAM)-dependent reaction. The protein is Phosphomethylpyrimidine synthase of Pseudomonas syringae pv. tomato (strain ATCC BAA-871 / DC3000).